The following is an 846-amino-acid chain: Penicillin G acylase (846 aa).

An N-terminal signal peptide occupies residues 1-26; sequence MKNRNRMIVNCVTASLMYYWSLPALA. Glutamate 178 provides a ligand contact to Ca(2+). A propeptide spans 236 to 289 (spacer peptide); that stretch reads ALLPRYDLPAPMLDRPAKGADGALLALTAGKNRETIAAQFAQGGANGLAGYPTT. Residue serine 290 is the Nucleophile of the active site. The Ca(2+) site is built by aspartate 362, valine 364, aspartate 365, proline 494, and aspartate 541.

It belongs to the peptidase S45 family. As to quaternary structure, heterodimer of an alpha subunit and a beta subunit processed from the same precursor. Ca(2+) is required as a cofactor.

The protein localises to the periplasm. It carries out the reaction a penicillin + H2O = 6-aminopenicillanate + a carboxylate. The protein is Penicillin G acylase (pac) of Escherichia coli.